The following is a 732-amino-acid chain: Ionotropic receptor 40a (732 aa).

An N-terminal signal peptide occupies residues 1-19; it reads MHKFLALGLLPYLLGLLNS. Residues N18, N235, and N299 are each glycosylated (N-linked (GlcNAc...) asparagine). Residues 20–369 are Extracellular-facing; sequence TRLTFIGNDE…RPFKQDIWPH (350 aa). Residues 370-390 form a helical membrane-spanning segment; it reads LILTIIFSGPIFYGIIALPYI. At 391-465 the chain is on the cytoplasmic side; the sequence is WRRRWANSDV…NELHNGYRAK (75 aa). The helical transmembrane segment at 466–486 threads the bilayer; the sequence is FLTIVYWIAATYVLADVYSAQ. The Extracellular segment spans residues 487–688; that stretch reads LTSQFARPAR…LNLRMLQGAF (202 aa). N531 carries an N-linked (GlcNAc...) asparagine glycan. The chain crosses the membrane as a helical span at residues 689-709; the sequence is IALGVGSLAAGVILLLEIVFI. Residues 710-732 lie on the Cytoplasmic side of the membrane; sequence KLDQARLWMLCSRLQWIRYDRKV.

This sequence belongs to the glutamate-gated ion channel (TC 1.A.10.1) family. In terms of tissue distribution, in the antenna, detected in sacculus neurons which innervate the first and second chambers (at protein level).

It localises to the cell membrane. In terms of biological role, integral part of a neural sensory system in the antenna that provides the neural basis for the response to environmental changes in humidity (hygrosensation). Together with Ir25a and Ir93a, mediates the response of the hygrosensory sacculus neurons to changes in relative humidity and is required for dry detection behavior. The polypeptide is Ionotropic receptor 40a (Drosophila melanogaster (Fruit fly)).